Here is a 445-residue protein sequence, read N- to C-terminus: T-box transcription factor TBX19 (445 aa).

The T-box DNA-binding region spans 45–218; sequence LEDAPLWQRF…YNPFAKAFLD (174 aa).

It localises to the nucleus. Transcriptional regulator involved in developmental processes. Can activate POMC gene expression and repress the alpha glycoprotein subunit and thyroid-stimulating hormone beta promoters. This chain is T-box transcription factor TBX19, found in Canis lupus familiaris (Dog).